The following is a 557-amino-acid chain: Warthog protein 4 (557 aa).

Residues 1–20 (MRFSLLALVLLSSSYKFTYG) form the signal peptide. The tract at residues 272-308 (QETNPQPPPPPGQQGGFVQPQGFQPQGGFQPQGFQPQ) is disordered. The span at 287–308 (GFVQPQGFQPQGGFQPQGFQPQ) shows a compositional bias: low complexity.

The protein belongs to the hedgehog family. Post-translationally, the C-terminal domain displays an autoproteolysis activity.

Its subcellular location is the secreted. The protein resides in the cell surface. It localises to the cell membrane. It is found in the extracellular space. In terms of biological role, intercellular signal essential for a variety of patterning events during development. The sequence is that of Warthog protein 4 (wrt-4) from Caenorhabditis elegans.